Reading from the N-terminus, the 485-residue chain is Glutamate--tRNA ligase (485 aa).

Residues 11-21 (PSPTGYMHVGN) carry the 'HIGH' region motif. The Zn(2+) site is built by cysteine 108, cysteine 110, cysteine 135, and aspartate 137. The short motif at 252-256 (KLSKR) is the 'KMSKS' region element. Lysine 255 serves as a coordination point for ATP.

It belongs to the class-I aminoacyl-tRNA synthetase family. Glutamate--tRNA ligase type 1 subfamily. Monomer. Zn(2+) serves as cofactor.

Its subcellular location is the cytoplasm. The enzyme catalyses tRNA(Glu) + L-glutamate + ATP = L-glutamyl-tRNA(Glu) + AMP + diphosphate. In terms of biological role, catalyzes the attachment of glutamate to tRNA(Glu) in a two-step reaction: glutamate is first activated by ATP to form Glu-AMP and then transferred to the acceptor end of tRNA(Glu). The chain is Glutamate--tRNA ligase from Clostridium botulinum (strain ATCC 19397 / Type A).